We begin with the raw amino-acid sequence, 260 residues long: Cytosolic Fe-S cluster assembly factor Nubp2 homolog (260 aa).

14–21 contributes to the ATP binding site; it reads GKGGVGKS. [4Fe-4S] cluster contacts are provided by Cys188 and Cys191.

Belongs to the Mrp/NBP35 ATP-binding proteins family. NUBP2/CFD1 subfamily. In terms of assembly, heterotetramer of 2 Nubp1 and 2 Nubp2 chains. It depends on [4Fe-4S] cluster as a cofactor.

It localises to the cytoplasm. Component of the cytosolic iron-sulfur (Fe/S) protein assembly (CIA) machinery. Required for maturation of extramitochondrial Fe-S proteins. The Nubp1-Nubp2 heterotetramer forms a Fe-S scaffold complex, mediating the de novo assembly of an Fe-S cluster and its transfer to target apoproteins. This chain is Cytosolic Fe-S cluster assembly factor Nubp2 homolog, found in Drosophila erecta (Fruit fly).